The following is a 396-amino-acid chain: L-tyrosine/L-aspartate decarboxylase (396 aa).

N6-(pyridoxal phosphate)lysine is present on K245.

The protein belongs to the group II decarboxylase family. MfnA subfamily. Homodimer. Pyridoxal 5'-phosphate is required as a cofactor.

The enzyme catalyses L-tyrosine + H(+) = tyramine + CO2. The catalysed reaction is L-aspartate + H(+) = beta-alanine + CO2. The protein operates within cofactor biosynthesis; methanofuran biosynthesis. It participates in cofactor biosynthesis; coenzyme A biosynthesis. Inhibited by hydroxylamine and O-methylhydroxylamine. In terms of biological role, catalyzes the decarboxylation of L-tyrosine to produce tyramine for methanofuran biosynthesis. Can also catalyze the decarboxylation of L-aspartate to produce beta-alanine for coenzyme A (CoA) biosynthesis. The protein is L-tyrosine/L-aspartate decarboxylase of Methanocaldococcus jannaschii (strain ATCC 43067 / DSM 2661 / JAL-1 / JCM 10045 / NBRC 100440) (Methanococcus jannaschii).